Consider the following 491-residue polypeptide: Synaptotagmin-9 (491 aa).

Residues 1–52 (MPGARDALCHQALQLLAELCARGALEHDSCQDFIYHLRDRARPRLRDPDISV) lie on the Vesicular side of the membrane. The segment at 9 to 31 (CHQALQLLAELCARGALEHDSCQ) is cysteine motif. Residues 53–73 (SLLTLVVTACGLALFGVSLFV) form a helical membrane-spanning segment. The Cytoplasmic portion of the chain corresponds to 74–491 (SWKLCWVPWR…AHWHSLVEKR (418 aa)). Residue Ser-177 is modified to Phosphoserine. C2 domains follow at residues 220–341 (ACGK…ILWK) and 352–485 (DLGE…AHWH). Positions 251, 257, 309, 310, 311, 314, 317, 383, 389, 443, and 445 each coordinate Ca(2+).

This sequence belongs to the synaptotagmin family. In terms of assembly, homodimer; disulfide-linked via the cysteine motif. Can also form heterodimers with SYT3, SYT6, SYT7 and SYT10. Requires Ca(2+) as cofactor.

Its subcellular location is the cytoplasmic vesicle. The protein localises to the secretory vesicle. It is found in the synaptic vesicle membrane. Its function is as follows. May be involved in Ca(2+)-dependent exocytosis of secretory vesicles through Ca(2+) and phospholipid binding to the C2 domain or may serve as Ca(2+) sensors in the process of vesicular trafficking and exocytosis. The chain is Synaptotagmin-9 (SYT9) from Homo sapiens (Human).